Here is a 370-residue protein sequence, read N- to C-terminus: S-adenosylmethionine:tRNA ribosyltransferase-isomerase (370 aa).

This sequence belongs to the QueA family. As to quaternary structure, monomer.

Its subcellular location is the cytoplasm. The enzyme catalyses 7-aminomethyl-7-carbaguanosine(34) in tRNA + S-adenosyl-L-methionine = epoxyqueuosine(34) in tRNA + adenine + L-methionine + 2 H(+). Its pathway is tRNA modification; tRNA-queuosine biosynthesis. Transfers and isomerizes the ribose moiety from AdoMet to the 7-aminomethyl group of 7-deazaguanine (preQ1-tRNA) to give epoxyqueuosine (oQ-tRNA). This is S-adenosylmethionine:tRNA ribosyltransferase-isomerase from Synechococcus sp. (strain WH7803).